The sequence spans 205 residues: Inactive ribonuclease-like protein 9 (205 aa).

Residues 1–24 (MMLITTHSLPLLLLLLQLWQPLQF) form the signal peptide. Cystine bridges form between C97-C152, C115-C167, and C122-C129. N-linked (GlcNAc...) asparagine glycans are attached at residues N130 and N142.

The protein belongs to the pancreatic ribonuclease family.

It localises to the secreted. Its function is as follows. Does not exhibit any ribonuclease activity. The sequence is that of Inactive ribonuclease-like protein 9 (RNASE9) from Cebus albifrons (White-fronted capuchin).